The sequence spans 57 residues: Large ribosomal subunit protein bL32 (57 aa).

The span at 1-20 (MAVPKKKTSKTKRDQRKANW) shows a compositional bias: basic residues. Residues 1 to 21 (MAVPKKKTSKTKRDQRKANWK) form a disordered region.

Belongs to the bacterial ribosomal protein bL32 family.

This chain is Large ribosomal subunit protein bL32, found in Rippkaea orientalis (strain PCC 8801 / RF-1) (Cyanothece sp. (strain PCC 8801)).